The chain runs to 150 residues: Small ribosomal subunit protein uS11 (150 aa).

This sequence belongs to the universal ribosomal protein uS11 family. Part of the 30S ribosomal subunit. Interacts with proteins S7 and S18. Binds to IF-3.

Located on the platform of the 30S subunit, it bridges several disparate RNA helices of the 16S rRNA. Forms part of the Shine-Dalgarno cleft in the 70S ribosome. This is Small ribosomal subunit protein uS11 from Pelagibacter ubique (strain HTCC1062).